Here is a 533-residue protein sequence, read N- to C-terminus: Multicopy suppressor of sporulation protein msa1 (533 aa).

Residues 30-68 are disordered; it reads DIPPGSLSENDNSTTFIKPPLETASSSTPIPSSSSSGVL. Residues 36–45 are compositionally biased toward polar residues; the sequence is LSENDNSTTF. Residues 54–68 are compositionally biased toward low complexity; that stretch reads SSSTPIPSSSSSGVL. The RRM 1 domain maps to 79-158; the sequence is ACLFVASLNS…RHIRIERAKV (80 aa). Residues 237-292 are disordered; that stretch reads YKKKGSSPFSPPNAHSRRRKSQGKDQSNTPVIKAPAPIPFSVSSDPPSTMGRSNSA. Residues 277–292 are compositionally biased toward polar residues; sequence SVSSDPPSTMGRSNSA. The RRM 2 domain maps to 365-441; it reads YSIFVGQLDP…KPLRVEFRQL (77 aa).

It is found in the cytoplasm. Negative regulator of sexual differentiation. Acts by repressing the transcription of meiosis-inducing, ste11-regulated genes. The polypeptide is Multicopy suppressor of sporulation protein msa1 (msa1) (Schizosaccharomyces pombe (strain 972 / ATCC 24843) (Fission yeast)).